A 53-amino-acid polypeptide reads, in one-letter code: ATP synthase protein 8 (53 aa).

Residues 9-29 (WLILFFIFSITLVIFNILNYF) traverse the membrane as a helical segment.

It belongs to the ATPase protein 8 family. As to quaternary structure, F-type ATPases have 2 components, CF(1) - the catalytic core - and CF(0) - the membrane proton channel.

It localises to the mitochondrion membrane. Functionally, mitochondrial membrane ATP synthase (F(1)F(0) ATP synthase or Complex V) produces ATP from ADP in the presence of a proton gradient across the membrane which is generated by electron transport complexes of the respiratory chain. F-type ATPases consist of two structural domains, F(1) - containing the extramembraneous catalytic core and F(0) - containing the membrane proton channel, linked together by a central stalk and a peripheral stalk. During catalysis, ATP synthesis in the catalytic domain of F(1) is coupled via a rotary mechanism of the central stalk subunits to proton translocation. Part of the complex F(0) domain. Minor subunit located with subunit a in the membrane. The polypeptide is ATP synthase protein 8 (mt:ATPase8) (Anopheles quadrimaculatus (Common malaria mosquito)).